The chain runs to 455 residues: MNHNNNNYDFDNKNNSIGGGGGSSSRSSSSRSSNRSSSGSSGGSGSNSSSSINNIINSDKDFITERKQTKSPPLTLPNIKTTTTTTTTTTTTTTTTTKNENISSSESENSSSRVESPNCNKKVKKTKTITISPTGYNINSKDDINKFTTYGYTNEKSNARRDPKWITDIIERYNRLKSESPNNNYNGSSNNNNNINNINNNSNNTTSPCQSPSSNTATITSISSPTSSSSSLSSPSPSFSINNIVNQDVDGCDRMNYTLLSQNNNNNNNNNYNNNNNNNNNNNNNNNNTNTNNNGDECIVKPISLIQNKKSGQRSLKTKEHKEILEALYRVTLYPTSEETKIISQILGMTFGQVKSSFRHRREKLSKSGLFSYAKNLKNCGKCTVPLDNFFENCKYLTTKETEEFAAAYDVSFEQIKNYFKGKRAILNKLSSKANQDNDNNNNNENNDDSYSDEG.

5 stretches are compositionally biased toward low complexity: residues 1–16, 24–39, 81–118, 179–239, and 263–294; these read MNHN…KNNS, SSRS…SSSG, TTTT…ESPN, ESPN…SPSF, and NNNN…TNNN. Disordered regions lie at residues 1–53, 67–121, 178–239, and 258–296; these read MNHN…SSIN, KQTK…NCNK, SESP…SPSF, and TLLS…NNGD. 2 DNA-binding regions (homeobox) span residues 310–369 and 372–431; these read KSGQ…SKSG and SYAK…NKLS. Positions 431–455 are disordered; that stretch reads SSKANQDNDNNNNNENNDDSYSDEG. Positions 435–445 are enriched in low complexity; the sequence is NQDNDNNNNNE. Residues 446-455 show a composition bias toward acidic residues; it reads NNDDSYSDEG.

It localises to the nucleus. Its function is as follows. Putative transcription factor. This Dictyostelium discoideum (Social amoeba) protein is Homeobox protein 14 (hbx14).